The sequence spans 61 residues: Large ribosomal subunit protein bL32 (61 aa).

Residues 1-16 (MAVPKKKTSKSRKNMR) are compositionally biased toward basic residues. Residues 1–20 (MAVPKKKTSKSRKNMRRAHD) form a disordered region.

This sequence belongs to the bacterial ribosomal protein bL32 family.

This Trichlorobacter lovleyi (strain ATCC BAA-1151 / DSM 17278 / SZ) (Geobacter lovleyi) protein is Large ribosomal subunit protein bL32.